Reading from the N-terminus, the 102-residue chain is Vacuolar ATPase assembly integral membrane protein VMA21 homolog (102 aa).

The Cytoplasmic segment spans residues 1 to 33 (MTTSSSSEPSTMATLFPNFRDQEVQSAVKNLLT). A helical transmembrane segment spans residues 34–54 (YSLVILIVPLASMFLLKQFFF). Residues 55–67 (EGLLGVSANDALT) are Lumenal-facing. The chain crosses the membrane as a helical span at residues 68 to 88 (YSAIIAVVLVHVVLGIWLFAA). At 89 to 102 (TKQEDRKKRENKQD) the chain is on the cytoplasmic side.

This sequence belongs to the VMA21 family.

It localises to the endoplasmic reticulum membrane. The protein resides in the endoplasmic reticulum-Golgi intermediate compartment membrane. It is found in the cytoplasmic vesicle. The protein localises to the COPII-coated vesicle membrane. Required for the assembly of the V0 complex of the vacuolar ATPase (V-ATPase) in the endoplasmic reticulum. This chain is Vacuolar ATPase assembly integral membrane protein VMA21 homolog, found in Caenorhabditis elegans.